We begin with the raw amino-acid sequence, 358 residues long: S-adenosylmethionine:tRNA ribosyltransferase-isomerase (358 aa).

The protein belongs to the QueA family. Monomer.

The protein resides in the cytoplasm. The enzyme catalyses 7-aminomethyl-7-carbaguanosine(34) in tRNA + S-adenosyl-L-methionine = epoxyqueuosine(34) in tRNA + adenine + L-methionine + 2 H(+). The protein operates within tRNA modification; tRNA-queuosine biosynthesis. In terms of biological role, transfers and isomerizes the ribose moiety from AdoMet to the 7-aminomethyl group of 7-deazaguanine (preQ1-tRNA) to give epoxyqueuosine (oQ-tRNA). In Desulfotalea psychrophila (strain LSv54 / DSM 12343), this protein is S-adenosylmethionine:tRNA ribosyltransferase-isomerase.